The following is a 120-amino-acid chain: uncharacterized protein (120 aa).

A helical transmembrane segment spans residues valine 47 to glycine 63.

The protein resides in the membrane. This is an uncharacterized protein from Sinorhizobium fredii (strain NBRC 101917 / NGR234).